A 128-amino-acid chain; its full sequence is Aspartate 1-decarboxylase (128 aa).

S25 acts as the Schiff-base intermediate with substrate; via pyruvic acid in catalysis. Position 25 is a pyruvic acid (Ser) (S25). Residue T57 coordinates substrate. Catalysis depends on Y58, which acts as the Proton donor. 73-75 (GAA) provides a ligand contact to substrate.

It belongs to the PanD family. As to quaternary structure, heterooctamer of four alpha and four beta subunits. The cofactor is pyruvate. Is synthesized initially as an inactive proenzyme, which is activated by self-cleavage at a specific serine bond to produce a beta-subunit with a hydroxyl group at its C-terminus and an alpha-subunit with a pyruvoyl group at its N-terminus.

Its subcellular location is the cytoplasm. It catalyses the reaction L-aspartate + H(+) = beta-alanine + CO2. It participates in cofactor biosynthesis; (R)-pantothenate biosynthesis; beta-alanine from L-aspartate: step 1/1. Functionally, catalyzes the pyruvoyl-dependent decarboxylation of aspartate to produce beta-alanine. The protein is Aspartate 1-decarboxylase of Chlorobium limicola (strain DSM 245 / NBRC 103803 / 6330).